The following is a 363-amino-acid chain: 3-dehydroquinate synthase (363 aa).

NAD(+) contacts are provided by residues 107–111, 131–132, lysine 144, and lysine 153; these read GVIGD and TT. Residues glutamate 186, histidine 251, and histidine 268 each contribute to the Zn(2+) site.

It belongs to the sugar phosphate cyclases superfamily. Dehydroquinate synthase family. NAD(+) serves as cofactor. It depends on Co(2+) as a cofactor. The cofactor is Zn(2+).

The protein localises to the cytoplasm. It catalyses the reaction 7-phospho-2-dehydro-3-deoxy-D-arabino-heptonate = 3-dehydroquinate + phosphate. It participates in metabolic intermediate biosynthesis; chorismate biosynthesis; chorismate from D-erythrose 4-phosphate and phosphoenolpyruvate: step 2/7. Catalyzes the conversion of 3-deoxy-D-arabino-heptulosonate 7-phosphate (DAHP) to dehydroquinate (DHQ). In Nostoc sp. (strain PCC 7120 / SAG 25.82 / UTEX 2576), this protein is 3-dehydroquinate synthase.